Here is a 622-residue protein sequence, read N- to C-terminus: Sodium-coupled monocarboxylate transporter 1 (622 aa).

At 1 to 15 (MVTPGNIGSFTVWDY) the chain is on the extracellular side. The helical transmembrane segment at 16 to 36 (LVFALMLLISAVIGIYYAFAG) threads the bilayer. Residues 37–51 (GGQKTSKDFLMGGRS) are Cytoplasmic-facing. A helical membrane pass occupies residues 52-72 (MTAVPVALSLTASFMSAVTVL). Topologically, residues 73 to 83 (GTPAEVYRFGA) are extracellular. A helical transmembrane segment spans residues 84–104 (MFIIFAFSYTIVVIISSEVFL). Residues 105-128 (PVFYRLGITSTYEYLELRFNKFVR) lie on the Cytoplasmic side of the membrane. Residues 129 to 149 (LLGTILFIIQTVLYTGIVIYA) traverse the membrane as a helical segment. At 150–161 (PALALNQVTGFD) the chain is on the extracellular side. A helical membrane pass occupies residues 162 to 182 (LWGAVVATGVVCTFYCTMGGL). Residues 183 to 184 (KA) are Cytoplasmic-facing. Residues 185-205 (VVWTDVFQVGIMVAGFTSVII) form a helical membrane-spanning segment. Residues 206–241 (RAVVVQGGIGPILNDSYYGDRLNFWDFDPNPLKRHT) lie on the Extracellular side of the membrane. Asn-219 carries N-linked (GlcNAc...) asparagine glycosylation. A helical membrane pass occupies residues 242-262 (FWTIVVGGTFTWTGIYGVNQA). At 263-283 (QVQRYIACKTRFQAKMSLYVN) the chain is on the cytoplasmic side. The helical transmembrane segment at 284 to 304 (LIGLWAILACAVLSGLAMYSI) threads the bilayer. The Extracellular portion of the chain corresponds to 305-336 (YKDCDPWTAKFVSAPDQLMPYLALDILRDYPG). Residues 337–357 (LPGLFVSCAYSGTLSTVSSSI) form a helical membrane-spanning segment. Residues 358–389 (NALAAVTVEDLIKPYIRSLSEKKMSWISKGTS) lie on the Cytoplasmic side of the membrane. Residues 390-410 (LLYGAICIGMAGIASLMGGLL) traverse the membrane as a helical segment. The Extracellular segment spans residues 411–415 (QAALS). A helical transmembrane segment spans residues 416-436 (IFGMVGGPLLGLFSLGILFPF). The Cytoplasmic segment spans residues 437-438 (VN). The helical transmembrane segment at 439–459 (SLGAVIGLLSGFAISLWVGIG) threads the bilayer. Residues 460–521 (SQIYAPSPSS…LADSWYSLSY (62 aa)) are Extracellular-facing. Asn-481 and Asn-488 each carry an N-linked (GlcNAc...) asparagine glycan. A helical transmembrane segment spans residues 522–542 (LYFSTIGTIVAVLVGVIVSLL). Over 543–622 (SGGLKQNVNR…KGEKTNGITA (80 aa)) the chain is Cytoplasmic. Residues 591–622 (DNDMEQGTDNPAFNNMEMTSTEKGEKTNGITA) are disordered. The segment covering 595–609 (EQGTDNPAFNNMEMT) has biased composition (polar residues).

The protein belongs to the sodium:solute symporter (SSF) (TC 2.A.21) family. In terms of tissue distribution, in the gastrula and neurula stages, expressed in the gastrula anterior endoderm and in the entire circumference of the blastopore lip superficial endoderm. At tailbud stages, abundant expression observed in the ventral midgut region. As development proceeds expression becomes restricted to the liver diverticulum and ultimately to the presumptive gallbladder, by tadpole stage 35. Also present in pronephros and the tip of the tail.

It localises to the apical cell membrane. The enzyme catalyses (S)-lactate(out) + 2 Na(+)(out) = (S)-lactate(in) + 2 Na(+)(in). The catalysed reaction is propanoate(out) + 2 Na(+)(out) = propanoate(in) + 2 Na(+)(in). It catalyses the reaction pyruvate(out) + 2 Na(+)(out) = pyruvate(in) + 2 Na(+)(in). It carries out the reaction acetate(out) + 2 Na(+)(out) = acetate(in) + 2 Na(+)(in). The enzyme catalyses butanoate(out) + 2 Na(+)(out) = butanoate(in) + 2 Na(+)(in). The catalysed reaction is nicotinate(out) + 2 Na(+)(out) = nicotinate(in) + 2 Na(+)(in). It catalyses the reaction (R)-3-hydroxybutanoate(out) + 2 Na(+)(out) = (R)-3-hydroxybutanoate(in) + 2 Na(+)(in). It carries out the reaction acetoacetate(out) + 2 Na(+)(out) = acetoacetate(in) + 2 Na(+)(in). The enzyme catalyses 4-methyl-2-oxopentanoate(out) + 2 Na(+)(out) = 4-methyl-2-oxopentanoate(in) + 2 Na(+)(in). The catalysed reaction is 5-oxo-L-proline(out) + 2 Na(+)(out) = 5-oxo-L-proline(in) + 2 Na(+)(in). It catalyses the reaction iodide(out) = iodide(in). It carries out the reaction chloride(in) = chloride(out). The enzyme catalyses nitrate(in) = nitrate(out). The catalysed reaction is bromide(in) = bromide(out). Its function is as follows. Acts as an electrogenic sodium (Na(+)) and chloride (Cl-)-dependent sodium-coupled solute transporter, including transport of monocarboxylates (short-chain fatty acids including L-lactate, D-lactate, pyruvate, acetate, propionate, valerate and butyrate), mocarboxylate drugs (nicotinate, benzoate, salicylate and 5-aminosalicylate) and ketone bodies (beta-D-hydroxybutyrate, acetoacetate and alpha-ketoisocaproate), with a Na(+):substrate stoichiometry of between 4:1 and 2:1. Catalyzes passive carrier mediated diffusion of iodide. Mediates iodide transport from the thyrocyte into the colloid lumen through the apical membrane. Mediates sodium-coupled electrogenic transport of pyroglutamate (5-oxo-L-proline). Can mediate the transport of chloride, bromide, iodide and nitrate ions when external concentration of sodium ions is reduced. This chain is Sodium-coupled monocarboxylate transporter 1, found in Xenopus laevis (African clawed frog).